A 135-amino-acid polypeptide reads, in one-letter code: Retinol-binding protein 5 (135 aa).

This sequence belongs to the calycin superfamily. Fatty-acid binding protein (FABP) family. Kidney.

The protein localises to the cytoplasm. Its function is as follows. Intracellular transport of retinol. This Bos taurus (Bovine) protein is Retinol-binding protein 5 (RBP5).